A 287-amino-acid polypeptide reads, in one-letter code: MAPANLPSVFNATSQDIEMLLAAQSHIGSKNLQVHMAPYLWKTRQDGVNVINVGKTWEKIVLAARIITAIDNPADVCVISARPYGQRAVLKFAAHTGAQAIAGRFTPGSFTNYITRSFKEPRLIVVTDPRTDAQAIKEASYVNIPVIALCDTDSPTEYVDVAIPTNNKGRHAIGCIWWMLAREVLRLRGTIYNRETPWDVMVDLYFYRDPEAEAEDKVEEEKLAGVEEVGPAAIESGFATGGGDWEATAPAAASGWDDAAAQPQNWDSAAQGAASWDEAAAPKEGQW.

Positions 235 to 287 (ESGFATGGGDWEATAPAAASGWDDAAAQPQNWDSAAQGAASWDEAAAPKEGQW) are disordered. Low complexity predominate over residues 247-261 (ATAPAAASGWDDAAA).

Belongs to the universal ribosomal protein uS2 family. As to quaternary structure, component of the small ribosomal subunit. Mature ribosomes consist of a small (40S) and a large (60S) subunit. The 40S subunit contains about 33 different proteins and 1 molecule of RNA (18S). The 60S subunit contains about 49 different proteins and 3 molecules of RNA (25S, 5.8S and 5S). Interacts with RPS21.

The protein localises to the cytoplasm. Required for the assembly and/or stability of the 40S ribosomal subunit. Required for the processing of the 20S rRNA-precursor to mature 18S rRNA in a late step of the maturation of 40S ribosomal subunits. The chain is Small ribosomal subunit protein uS2 from Pyricularia oryzae (strain 70-15 / ATCC MYA-4617 / FGSC 8958) (Rice blast fungus).